The sequence spans 257 residues: 4-chloro-allylglycine synthase (257 aa).

The Fe cation site is built by E112, H119, E173, H203, E207, and H210.

It depends on Fe(2+) as a cofactor.

The enzyme catalyses 4-chloro-L-lysine + AH2 + O2 = L-2-amino-4-chloropent-4-enoate + formaldehyde + A + NH4(+) + H2O. Its pathway is amino-acid metabolism. It participates in antibiotic biosynthesis. In terms of biological role, involved in the biosynthesis of terminal alkyne-containing amino acids such as L-propargylglycine (Pra) and L-beta-ethynylserine, that are produced as antibiotics by S.cattleya. Catalyzes an oxidative C-C bond cleavage in 4-chloro-L-lysine to form 4-chloro-allyl-L-glycine (also named L-2-amino-4-chloropent-4-enoate), with release of formaldehyde and ammonia. Is also able to react with L-lysine directly to produce allylglycine in vitro. The sequence is that of 4-chloro-allylglycine synthase from Streptantibioticus cattleyicolor (strain ATCC 35852 / DSM 46488 / JCM 4925 / NBRC 14057 / NRRL 8057) (Streptomyces cattleya).